The chain runs to 257 residues: Probable enoyl-CoA hydratase (257 aa).

Belongs to the enoyl-CoA hydratase/isomerase family.

The catalysed reaction is a (3S)-3-hydroxyacyl-CoA = a (2E)-enoyl-CoA + H2O. It catalyses the reaction a 4-saturated-(3S)-3-hydroxyacyl-CoA = a (3E)-enoyl-CoA + H2O. Its function is as follows. Could possibly oxidize fatty acids using specific components. This Rhizobium meliloti (strain 1021) (Ensifer meliloti) protein is Probable enoyl-CoA hydratase (fadB1).